A 389-amino-acid chain; its full sequence is S-adenosylmethionine synthase (389 aa).

H15 contributes to the ATP binding site. Residue D17 coordinates Mg(2+). K(+) is bound at residue E43. Positions 56 and 99 each coordinate L-methionine. Residues Q99 to E109 are flexible loop. Residues D166–K168, R234–F235, D243, R249–K250, A266, and K270 each bind ATP. D243 provides a ligand contact to L-methionine. K274 lines the L-methionine pocket.

The protein belongs to the AdoMet synthase family. Homotetramer; dimer of dimers. It depends on Mg(2+) as a cofactor. K(+) serves as cofactor.

It localises to the cytoplasm. The enzyme catalyses L-methionine + ATP + H2O = S-adenosyl-L-methionine + phosphate + diphosphate. It participates in amino-acid biosynthesis; S-adenosyl-L-methionine biosynthesis; S-adenosyl-L-methionine from L-methionine: step 1/1. Its function is as follows. Catalyzes the formation of S-adenosylmethionine (AdoMet) from methionine and ATP. The overall synthetic reaction is composed of two sequential steps, AdoMet formation and the subsequent tripolyphosphate hydrolysis which occurs prior to release of AdoMet from the enzyme. The protein is S-adenosylmethionine synthase of Neisseria meningitidis serogroup B (strain ATCC BAA-335 / MC58).